The following is a 542-amino-acid chain: CTP synthase (542 aa).

The segment at 1-265 (MARYVFITGG…DDEVLAAFGI (265 aa)) is amidoligase domain. Position 13 (S13) interacts with CTP. S13 contacts UTP. ATP is bound by residues 14–19 (SLGKGI) and D71. Mg(2+) contacts are provided by D71 and E139. CTP-binding positions include 146–148 (DIE), 186–191 (KTKPTQ), and K222. UTP is bound by residues 186–191 (KTKPTQ) and K222. The region spanning 291–541 (TIAIVGKYTG…IEAATEQSRL (251 aa)) is the Glutamine amidotransferase type-1 domain. G353 serves as a coordination point for L-glutamine. Residue C380 is the Nucleophile; for glutamine hydrolysis of the active site. L-glutamine is bound by residues 381–384 (FGMQ), E404, and R469. Active-site residues include H514 and E516.

It belongs to the CTP synthase family. Homotetramer.

It carries out the reaction UTP + L-glutamine + ATP + H2O = CTP + L-glutamate + ADP + phosphate + 2 H(+). It catalyses the reaction L-glutamine + H2O = L-glutamate + NH4(+). The catalysed reaction is UTP + NH4(+) + ATP = CTP + ADP + phosphate + 2 H(+). The protein operates within pyrimidine metabolism; CTP biosynthesis via de novo pathway; CTP from UDP: step 2/2. Allosterically activated by GTP, when glutamine is the substrate; GTP has no effect on the reaction when ammonia is the substrate. The allosteric effector GTP functions by stabilizing the protein conformation that binds the tetrahedral intermediate(s) formed during glutamine hydrolysis. Inhibited by the product CTP, via allosteric rather than competitive inhibition. Its function is as follows. Catalyzes the ATP-dependent amination of UTP to CTP with either L-glutamine or ammonia as the source of nitrogen. Regulates intracellular CTP levels through interactions with the four ribonucleotide triphosphates. In Rhizobium leguminosarum bv. trifolii (strain WSM2304), this protein is CTP synthase.